Here is a 271-residue protein sequence, read N- to C-terminus: PH domain-containing protein ECU06_0670 (271 aa).

Positions 26-145 (AKKTLDSSES…EKKNDAFIPP (120 aa)) are disordered. Composition is skewed to basic and acidic residues over residues 42-64 (EVGE…EPAM), 92-120 (QPEK…LLDK), and 128-140 (EENA…KKND). A PH domain is found at 166–267 (NTVVEGWMWK…WVEKLNETIR (102 aa)).

This is PH domain-containing protein ECU06_0670 from Encephalitozoon cuniculi (strain GB-M1) (Microsporidian parasite).